The primary structure comprises 410 residues: Multifunctional CCA protein (410 aa).

ATP is bound by residues glycine 8 and arginine 11. Residues glycine 8 and arginine 11 each contribute to the CTP site. Residues aspartate 21 and aspartate 23 each contribute to the Mg(2+) site. Arginine 91, arginine 138, and arginine 141 together coordinate ATP. Residues arginine 91, arginine 138, and arginine 141 each contribute to the CTP site. The region spanning 229–347 (TGIHQEMVSD…AQLALVCEAD (119 aa)) is the HD domain.

Belongs to the tRNA nucleotidyltransferase/poly(A) polymerase family. Bacterial CCA-adding enzyme type 1 subfamily. Monomer. Can also form homodimers and oligomers. Mg(2+) is required as a cofactor. The cofactor is Ni(2+).

The catalysed reaction is a tRNA precursor + 2 CTP + ATP = a tRNA with a 3' CCA end + 3 diphosphate. It catalyses the reaction a tRNA with a 3' CCA end + 2 CTP + ATP = a tRNA with a 3' CCACCA end + 3 diphosphate. In terms of biological role, catalyzes the addition and repair of the essential 3'-terminal CCA sequence in tRNAs without using a nucleic acid template. Adds these three nucleotides in the order of C, C, and A to the tRNA nucleotide-73, using CTP and ATP as substrates and producing inorganic pyrophosphate. tRNA 3'-terminal CCA addition is required both for tRNA processing and repair. Also involved in tRNA surveillance by mediating tandem CCA addition to generate a CCACCA at the 3' terminus of unstable tRNAs. While stable tRNAs receive only 3'-terminal CCA, unstable tRNAs are marked with CCACCA and rapidly degraded. In Xanthomonas axonopodis pv. citri (strain 306), this protein is Multifunctional CCA protein.